The primary structure comprises 147 residues: Large ribosomal subunit protein bL9 (147 aa).

It belongs to the bacterial ribosomal protein bL9 family.

Functionally, binds to the 23S rRNA. The chain is Large ribosomal subunit protein bL9 from Trichlorobacter lovleyi (strain ATCC BAA-1151 / DSM 17278 / SZ) (Geobacter lovleyi).